The primary structure comprises 31 residues: Cyclotide mden-J (31 aa).

A cross-link (cyclopeptide (Gly-Asn)) is located at residues 1–31 (GSIPCGESCVYIPCISSIVGCACKSKVCYKN). Intrachain disulfides connect Cys5-Cys21, Cys9-Cys23, and Cys14-Cys28.

Belongs to the cyclotide family. Bracelet subfamily. In terms of processing, this is a cyclic peptide.

Its function is as follows. Probably participates in a plant defense mechanism. This chain is Cyclotide mden-J, found in Melicytus dentatus (Tree violet).